The chain runs to 609 residues: Snake venom metalloproteinase-disintegrin-like mocarhagin (609 aa).

Residues 1 to 20 (MIQALLVAICLAVFPYQGSS) form the signal peptide. A propeptide spanning residues 21–191 (IILESGNVND…DEPIEKSSQL (171 aa)) is cleaved from the precursor. Residues 205 to 400 (KYIEFYVVVD…DRPQCILNKP (196 aa)) enclose the Peptidase M12B domain. Ca(2+)-binding residues include Glu-208 and Asp-292. A glycan (N-linked (GlcNAc...) asparagine) is linked at Asn-303. 3 disulfide bridges follow: Cys-316-Cys-395, Cys-356-Cys-379, and Cys-358-Cys-363. Residues His-341 and His-345 each coordinate Zn(2+). Cys-395, Asn-398, Val-410, Asn-413, Phe-415, Glu-417, Glu-420, and Asp-423 together coordinate Ca(2+). The Disintegrin domain occupies 408–494 (PPVCGNYFVE…KCPKDSFQRN (87 aa)). 14 cysteine pairs are disulfide-bonded: Cys-411–Cys-440, Cys-422–Cys-435, Cys-424–Cys-430, Cys-434–Cys-457, Cys-448–Cys-454, Cys-453–Cys-479, Cys-466–Cys-486, Cys-473–Cys-505, Cys-498–Cys-510, Cys-517–Cys-567, Cys-532–Cys-575, Cys-545–Cys-555, Cys-562–Cys-601, and Cys-595–Cys-606. The D/ECD-tripeptide signature appears at 472 to 474 (DCD). A glycan (N-linked (GlcNAc...) asparagine) is linked at Asn-507.

This sequence belongs to the venom metalloproteinase (M12B) family. P-III subfamily. P-IIIa sub-subfamily. As to quaternary structure, monomer. Requires Zn(2+) as cofactor. As to expression, expressed by the venom gland.

It is found in the secreted. Its activity is regulated as follows. Inhibited by EDTA and diisopropyl fluorophosphate (DFP). Also inhibited by an excess of zinc or calcium ions. In terms of biological role, snake venom zinc metalloproteinase that inhibits platelet aggregation by cleaving platelet glycoprotein Ib alpha (GP1BA) at Glu-298/Asp-299, and abolishes binding of von Willebrand factor (VWF) to GPIBA. Cleaves P-selectin glycoprotein ligand-1 (PSGL-1/SELPLG) at Tyr-51/Asp-52, and completely abolishes the binding of PSGL-1 to P-selectin. Anionic amino acid sequences containing sulfated tyrosines are needed for cleavages. Inhibits the thrombin-induced platelet aggregation, and the thrombin-induced release of ATP and ADP. Has lectin activity (inhibited by heparin). This is Snake venom metalloproteinase-disintegrin-like mocarhagin from Naja mossambica (Mozambique spitting cobra).